The chain runs to 491 residues: Glutamyl-tRNA(Gln) amidotransferase subunit A (491 aa).

Active-site charge relay system residues include K77 and S152. S176 functions as the Acyl-ester intermediate in the catalytic mechanism.

This sequence belongs to the amidase family. GatA subfamily. Heterotrimer of A, B and C subunits.

The enzyme catalyses L-glutamyl-tRNA(Gln) + L-glutamine + ATP + H2O = L-glutaminyl-tRNA(Gln) + L-glutamate + ADP + phosphate + H(+). Its function is as follows. Allows the formation of correctly charged Gln-tRNA(Gln) through the transamidation of misacylated Glu-tRNA(Gln) in organisms which lack glutaminyl-tRNA synthetase. The reaction takes place in the presence of glutamine and ATP through an activated gamma-phospho-Glu-tRNA(Gln). This is Glutamyl-tRNA(Gln) amidotransferase subunit A from Chlamydia felis (strain Fe/C-56) (Chlamydophila felis).